Reading from the N-terminus, the 104-residue chain is UPF0473 protein LJ_0477 (104 aa).

Belongs to the UPF0473 family.

The chain is UPF0473 protein LJ_0477 from Lactobacillus johnsonii (strain CNCM I-12250 / La1 / NCC 533).